A 269-amino-acid polypeptide reads, in one-letter code: Propanediol uptake facilitator PduF (269 aa).

2 helical membrane-spanning segments follow: residues 10-30 and 42-62; these read IAEF…LSAL and ICII…GISG. Positions 66-68 match the NPA 1 motif; it reads NPA. 3 consecutive transmembrane segments (helical) span residues 69–89, 143–163, and 179–199; these read ITIA…PYTV, VWQA…MIMA, and LLIG…TGFA. The short motif at 201-203 is the NPA 2 element; that stretch reads NPA. A helical membrane pass occupies residues 228 to 248; that stretch reads IPYFIVPIVAPIIGACAGAAI.

This sequence belongs to the MIP/aquaporin (TC 1.A.8) family.

It is found in the cell inner membrane. In terms of biological role, probably facilitates diffusion of 1,2-propanediol (1,2-PD) into the cell. In Citrobacter freundii, this protein is Propanediol uptake facilitator PduF.